We begin with the raw amino-acid sequence, 298 residues long: Acetylglutamate kinase (298 aa).

Residues 69-70 (GG), R91, and N196 contribute to the substrate site.

It belongs to the acetylglutamate kinase family. ArgB subfamily.

The protein resides in the cytoplasm. It carries out the reaction N-acetyl-L-glutamate + ATP = N-acetyl-L-glutamyl 5-phosphate + ADP. The protein operates within amino-acid biosynthesis; L-arginine biosynthesis; N(2)-acetyl-L-ornithine from L-glutamate: step 2/4. In terms of biological role, catalyzes the ATP-dependent phosphorylation of N-acetyl-L-glutamate. This Rhodopseudomonas palustris (strain BisB18) protein is Acetylglutamate kinase.